A 555-amino-acid polypeptide reads, in one-letter code: Transmembrane protein 87B (555 aa).

Positions 1–42 (MAAACRSEAGLLPSLLCRRPAGAQLLRVALCLLCWVPAAVDA) are cleaved as a signal peptide. Residues 43-216 (VPELGLWTRT…HGYISASDWP (174 aa)) are Lumenal-facing. 3 N-linked (GlcNAc...) asparagine glycosylation sites follow: Asn-68, Asn-160, and Asn-198. A helical membrane pass occupies residues 217 to 237 (LMIFYMVMCIVYILYGVLWLL). Residues 238 to 248 (WSACYWKDILR) lie on the Cytoplasmic side of the membrane. The helical transmembrane segment at 249 to 269 (IQFWIAAVIFLGMLEKAVFYS) threads the bilayer. At 270-300 (EYQNINSTGLSTQGLLIFAELISAVKRTLAR) the chain is on the lumenal side. Asn-275 carries N-linked (GlcNAc...) asparagine glycosylation. The chain crosses the membrane as a helical span at residues 301–321 (LLVIIVSLGYGIVKPRLGTVM). The Cytoplasmic portion of the chain corresponds to 322–323 (HR). A helical transmembrane segment spans residues 324–344 (VIGLGLLYLIFAAIEGVMRVI). The Lumenal portion of the chain corresponds to 345–351 (GGSKHLA). A helical transmembrane segment spans residues 352–372 (VVLTDIVLAVIDSIFVWFIFI). Topologically, residues 373-394 (SLAQTMKTLRLRKNTVKFSLYR) are cytoplasmic. The chain crosses the membrane as a helical span at residues 395 to 415 (HFTNTLIFAVLASIVFMVWTT). Residues 416 to 429 (KTFRIAKCQSDWME) are Lumenal-facing. Residues 430-450 (LWVDDAFWSFLFSVILIVIMF) form a helical membrane-spanning segment. Topologically, residues 451 to 555 (LWRPSANNQR…EKMFSSEKIM (105 aa)) are cytoplasmic. Phosphoserine is present on residues Ser-470, Ser-497, and Ser-534.

Belongs to the LU7TM family. TMEM87 subfamily.

The protein resides in the golgi apparatus membrane. In terms of biological role, may be involved in retrograde transport from endosomes to the trans-Golgi network (TGN). The protein is Transmembrane protein 87B of Mus musculus (Mouse).